The chain runs to 446 residues: Glutamyl-tRNA reductase 2 (446 aa).

Residues T53–R56, S105, E110–Q112, and Q116 each bind substrate. C54 (nucleophile) is an active-site residue. G185–G190 serves as a coordination point for NADP(+). Residues A409 to T446 form a disordered region. Residues G431–P440 are compositionally biased toward low complexity.

The protein belongs to the glutamyl-tRNA reductase family. Homodimer.

It catalyses the reaction (S)-4-amino-5-oxopentanoate + tRNA(Glu) + NADP(+) = L-glutamyl-tRNA(Glu) + NADPH + H(+). It participates in porphyrin-containing compound metabolism; protoporphyrin-IX biosynthesis; 5-aminolevulinate from L-glutamyl-tRNA(Glu): step 1/2. In terms of biological role, catalyzes the NADPH-dependent reduction of glutamyl-tRNA(Glu) to glutamate 1-semialdehyde (GSA). This is Glutamyl-tRNA reductase 2 from Anaeromyxobacter dehalogenans (strain 2CP-C).